A 318-amino-acid chain; its full sequence is Receptor homology region, transmembrane domain- and RING domain-containing protein 5 (318 aa).

Residues 1–20 form the signal peptide; that stretch reads MNYSWITIMSLLVICKLASA. Over 22 to 163 the chain is Lumenal; sequence VVLIGKNTIL…IPGFGISSWS (142 aa). Cysteine 62 and cysteine 87 are oxidised to a cystine. Residues 70 to 143 form the PA domain; the sequence is EKRSKYRSSY…RASGEVLKGY (74 aa). The N-linked (GlcNAc...) asparagine glycan is linked to asparagine 121. The chain crosses the membrane as a helical span at residues 164–184; it reads IMGITFISLLAMSAILATCFV. The Cytoplasmic segment spans residues 185–318; that stretch reads VRRHQIRQSV…DLPIVVRVYL (134 aa). The RING-type; atypical zinc finger occupies 233–275; that stretch reads CAICIDDYCVGEKLRILPCKHKYHAVCIDSWLGRCRSFCPVCK.

It localises to the prevacuolar compartment membrane. Its subcellular location is the protein storage vacuole membrane. Involved in the trafficking of vacuolar proteins. May function as a sorting receptor for protein trafficking to the protein storage vacuole (PSV). The polypeptide is Receptor homology region, transmembrane domain- and RING domain-containing protein 5 (RMR5) (Arabidopsis thaliana (Mouse-ear cress)).